The sequence spans 616 residues: Dihydroxy-acid dehydratase (616 aa).

Position 81 (Asp-81) interacts with Mg(2+). Cys-122 is a binding site for [2Fe-2S] cluster. Residues Asp-123 and Lys-124 each contribute to the Mg(2+) site. The residue at position 124 (Lys-124) is an N6-carboxylysine. Cys-195 is a binding site for [2Fe-2S] cluster. Residue Glu-491 participates in Mg(2+) binding. Ser-517 serves as the catalytic Proton acceptor.

Belongs to the IlvD/Edd family. Homodimer. The cofactor is [2Fe-2S] cluster. It depends on Mg(2+) as a cofactor.

The enzyme catalyses (2R)-2,3-dihydroxy-3-methylbutanoate = 3-methyl-2-oxobutanoate + H2O. It carries out the reaction (2R,3R)-2,3-dihydroxy-3-methylpentanoate = (S)-3-methyl-2-oxopentanoate + H2O. It participates in amino-acid biosynthesis; L-isoleucine biosynthesis; L-isoleucine from 2-oxobutanoate: step 3/4. It functions in the pathway amino-acid biosynthesis; L-valine biosynthesis; L-valine from pyruvate: step 3/4. In terms of biological role, functions in the biosynthesis of branched-chain amino acids. Catalyzes the dehydration of (2R,3R)-2,3-dihydroxy-3-methylpentanoate (2,3-dihydroxy-3-methylvalerate) into 2-oxo-3-methylpentanoate (2-oxo-3-methylvalerate) and of (2R)-2,3-dihydroxy-3-methylbutanoate (2,3-dihydroxyisovalerate) into 2-oxo-3-methylbutanoate (2-oxoisovalerate), the penultimate precursor to L-isoleucine and L-valine, respectively. This Shigella sonnei (strain Ss046) protein is Dihydroxy-acid dehydratase.